A 469-amino-acid chain; its full sequence is Protein RUFY3 (469 aa).

2 positions are modified to phosphothreonine: threonine 5 and threonine 12. Serine 34 and serine 49 each carry phosphoserine. Threonine 51 is subject to Phosphothreonine. The RUN domain maps to 95-227 (DSDYAPLQQF…IDANFCMKGE (133 aa)). 2 coiled-coil regions span residues 271–362 (NRHL…VEKE) and 422–463 (KSEL…AANK).

In terms of assembly, interacts with PAK1. Interacts (via C-terminus) with Ras-related Rab-5 proteins. Interacts (via C-terminus) with Ras-related Rap-2 proteins. Interacts with PIK3CA and PIK3R1. Interacts (via N-terminus) with FSCN1; this interaction induces neuron axon development. Interacts with DBN1. Interacts (via the second coiled coil) with GTP-, but not GDP-bound ARL8A and ARL8B. Interacts with dynactin/DCTN1 and the dynein intermediate chain DYNC1I1/2. Directly interacts with DYNC1LI1. Post-translationally, phosphorylated by PAK1. Isoform 1 is partially phosphorylated. In terms of tissue distribution, overexpressed in gastric cancer cells and tissues (at protein level).

Its subcellular location is the cytoplasm. It localises to the endomembrane system. It is found in the cell projection. The protein resides in the invadopodium. The protein localises to the perikaryon. Its subcellular location is the growth cone. It localises to the filopodium. It is found in the lamellipodium. The protein resides in the lysosome. In terms of biological role, ARL8 effector that promotes the coupling of endolysosomes to dynein-dynactin for retrograde transport along microtubules. Acts by binding both GTP-bound ARL8 and dynein-dynactin. In nonneuronal cells, promotes concentration of endolysosomes in the juxtanuclear area. In hippocampal neurons, drives retrograde transport of endolysosomes from the axon to the soma. Plays a role in the generation of neuronal polarity formation and axon growth. Implicated in the formation of a single axon by developing neurons. May inhibit the formation of additional axons by inhibition of PI3K in minor neuronal processes. Plays a role in the formation of F-actin-enriched protrusive structures at the cell periphery. Plays a role in cytoskeletal organization by regulating the subcellular localization of FSCN1 and DBN1 at axonal growth cones. The chain is Protein RUFY3 from Homo sapiens (Human).